The following is a 239-amino-acid chain: NAD-dependent protein deacylase (239 aa).

In terms of domain architecture, Deacetylase sirtuin-type spans 1–234 (MENLNIVTLT…KKVYDYLREK (234 aa)). NAD(+)-binding positions include 11–30 (GAGI…DGLW) and 89–92 (QNVD). Residue histidine 107 is the Proton acceptor of the active site. Residues cysteine 115, cysteine 118, cysteine 136, and cysteine 139 each contribute to the Zn(2+) site. NAD(+) is bound by residues 176-178 (GTS), 202-204 (NPE), and alanine 220.

It belongs to the sirtuin family. Class III subfamily. It depends on Zn(2+) as a cofactor.

The protein resides in the cytoplasm. The enzyme catalyses N(6)-acetyl-L-lysyl-[protein] + NAD(+) + H2O = 2''-O-acetyl-ADP-D-ribose + nicotinamide + L-lysyl-[protein]. In terms of biological role, NAD-dependent protein deacetylase which modulates the activities of several proteins which are inactive in their acetylated form. In Aquifex aeolicus (strain VF5), this protein is NAD-dependent protein deacylase.